Reading from the N-terminus, the 50-residue chain is C-C motif chemokine 5 (50 aa).

The protein belongs to the intercrine beta (chemokine CC) family.

It localises to the secreted. Chemoattractant for blood monocytes, memory T-helper cells and eosinophils. Causes the release of histamine from basophils and activates eosinophils. May activate several chemokine receptors including CCR1, CCR3, CCR4 and CCR5. May also be an agonist of the G protein-coupled receptor GPR75. Together with GPR75, may play a role in neuron survival through activation of a downstream signaling pathway involving the PI3, Akt and MAP kinases. By activating GPR75 may also play a role in insulin secretion by islet cells. In Sus scrofa (Pig), this protein is C-C motif chemokine 5 (CCL5).